We begin with the raw amino-acid sequence, 258 residues long: MKLDDIKISRAIVEGYMEDLLDYMEMDVAIGGGGPSGLTAGYYLARAGLKVALFERKLSIGGGMWGGGMMFNKIVVQDEGREILDEFGIRSEPYDEGYHVADSVEATSTLCSRACQAGLKIFNLMSIEDVMIRDEGITGLVLNWSSVEMAGLHVDPLTVRARAVIDATGHDCEIVKVVERKIGPELNTPDGRIQGERSMWADVGEAALIENTREVYPNLYVAGMASNAVYGAPRMGPIFGGMLVSGRRVAEMIIEKLK.

Residues Ser-36, 55-56, Gly-63, Ile-127, and 153-155 contribute to the NAD(+) site; these read ER and HVD. The Fe cation site is built by Asp-155 and His-170. NAD(+) is bound at residue Met-224. Arg-234 contributes to the glycine binding site.

It belongs to the THI4 family. In terms of assembly, homooctamer; tetramer of dimers. Fe(2+) is required as a cofactor.

The enzyme catalyses hydrogen sulfide + glycine + NAD(+) = ADP-5-ethyl-4-methylthiazole-2-carboxylate + nicotinamide + 3 H2O + H(+). It participates in cofactor biosynthesis; thiamine diphosphate biosynthesis. In terms of biological role, involved in the biosynthesis of the thiazole moiety of thiamine. Catalyzes the conversion of NAD and glycine to adenosine diphosphate 5-(2-hydroxyethyl)-4-methylthiazole-2-carboxylate (ADT), an adenylated thiazole intermediate, using free sulfide as a source of sulfur. This chain is Thiamine thiazole synthase, found in Methanothermobacter thermautotrophicus (strain ATCC 29096 / DSM 1053 / JCM 10044 / NBRC 100330 / Delta H) (Methanobacterium thermoautotrophicum).